Here is a 249-residue protein sequence, read N- to C-terminus: Glucosamine-6-phosphate deaminase (249 aa).

Residue Asp-67 is the Proton acceptor; for enolization step of the active site. Catalysis depends on Asn-136, which acts as the For ring-opening step. Catalysis depends on His-138, which acts as the Proton acceptor; for ring-opening step. The active-site For ring-opening step is Glu-143.

This sequence belongs to the glucosamine/galactosamine-6-phosphate isomerase family. NagB subfamily.

The enzyme catalyses alpha-D-glucosamine 6-phosphate + H2O = beta-D-fructose 6-phosphate + NH4(+). It functions in the pathway amino-sugar metabolism; N-acetylneuraminate degradation; D-fructose 6-phosphate from N-acetylneuraminate: step 5/5. In terms of biological role, catalyzes the reversible isomerization-deamination of glucosamine 6-phosphate (GlcN6P) to form fructose 6-phosphate (Fru6P) and ammonium ion. This Clostridium botulinum (strain Eklund 17B / Type B) protein is Glucosamine-6-phosphate deaminase.